We begin with the raw amino-acid sequence, 335 residues long: DNA-directed RNA polymerase subunit alpha (335 aa).

The alpha N-terminal domain (alpha-NTD) stretch occupies residues 1–233; it reads MVREKITVST…DLFIPFLHME (233 aa). The alpha C-terminal domain (alpha-CTD) stretch occupies residues 265 to 335; the sequence is KEIALKSIFI…KQLVIFLPKK (71 aa).

This sequence belongs to the RNA polymerase alpha chain family. In terms of assembly, in plastids the minimal PEP RNA polymerase catalytic core is composed of four subunits: alpha, beta, beta', and beta''. When a (nuclear-encoded) sigma factor is associated with the core the holoenzyme is formed, which can initiate transcription.

It localises to the plastid. The protein localises to the chloroplast. It catalyses the reaction RNA(n) + a ribonucleoside 5'-triphosphate = RNA(n+1) + diphosphate. Its function is as follows. DNA-dependent RNA polymerase catalyzes the transcription of DNA into RNA using the four ribonucleoside triphosphates as substrates. This chain is DNA-directed RNA polymerase subunit alpha, found in Coffea arabica (Arabian coffee).